Here is an 801-residue protein sequence, read N- to C-terminus: Quinoprotein glucose dehydrogenase A (801 aa).

Residues 1 to 33 (MNQPTSRSGLTTFTVIIIGLLALFLLIGGIWLA) form the signal peptide. 4 consecutive transmembrane segments (helical) span residues 39–55 (IYYI…AWQL), 59–79 (ASTA…WSVW), 94–108 (ILGI…PAVT), and 119–138 (VALS…SIFN). The Proton acceptor role is filled by Asp471.

The protein belongs to the bacterial PQQ dehydrogenase family. As to quaternary structure, monomer. Pyrroloquinoline quinone serves as cofactor.

Its subcellular location is the cell inner membrane. The catalysed reaction is D-glucose + A = D-glucono-1,5-lactone + AH2. Its function is as follows. Catalyzes an exceptionally high rate of oxidation of a wide range of aldose sugars, including D-glucose, galactose, arabinose and xylose, and also the disaccharides lactose, cellobiose and maltose. The sequence is that of Quinoprotein glucose dehydrogenase A (gdhA) from Acinetobacter calcoaceticus.